The sequence spans 335 residues: MADERIVSAENDDFAEASIEKTLRPQVLAQYIGQDRVKNELAVYIEAAKKREESLDHVLLYGPPGLGKTTLAMVIANELQVQIRTTSGPAIERPGDLVALLNELQPGDVLFIDEIHRLPKMVEELLYSAMEDFYIDIVVGQGPTAHPVHFPLPPFTLIGATTRAGLLSAPLRDRFGIVEHMAYYTEADLMDIVQRSAGVFNMSIVPDGALEIARRSRGTPRIANRLLKRTRDYAQVADQNTIDQAIADHALSQLQVDIRGLDGVDRKILQMMIDYYQGGPVGLKTIAANIGEENETIEEVYEPYLLQIGFLKRTQRGRMVTPAGYAHLGMPYPEK.

Residues 2–184 (ADERIVSAEN…FGIVEHMAYY (183 aa)) form a large ATPase domain (RuvB-L) region. ATP contacts are provided by residues L23, R24, G65, K68, T69, T70, 131-133 (EDF), R174, Y184, and R221. A Mg(2+)-binding site is contributed by T69. Positions 185 to 255 (TEADLMDIVQ…IADHALSQLQ (71 aa)) are small ATPAse domain (RuvB-S). Residues 258-335 (IRGLDGVDRK…AHLGMPYPEK (78 aa)) are head domain (RuvB-H). R313 and R318 together coordinate DNA.

Belongs to the RuvB family. In terms of assembly, homohexamer. Forms an RuvA(8)-RuvB(12)-Holliday junction (HJ) complex. HJ DNA is sandwiched between 2 RuvA tetramers; dsDNA enters through RuvA and exits via RuvB. An RuvB hexamer assembles on each DNA strand where it exits the tetramer. Each RuvB hexamer is contacted by two RuvA subunits (via domain III) on 2 adjacent RuvB subunits; this complex drives branch migration. In the full resolvosome a probable DNA-RuvA(4)-RuvB(12)-RuvC(2) complex forms which resolves the HJ.

The protein resides in the cytoplasm. The catalysed reaction is ATP + H2O = ADP + phosphate + H(+). Functionally, the RuvA-RuvB-RuvC complex processes Holliday junction (HJ) DNA during genetic recombination and DNA repair, while the RuvA-RuvB complex plays an important role in the rescue of blocked DNA replication forks via replication fork reversal (RFR). RuvA specifically binds to HJ cruciform DNA, conferring on it an open structure. The RuvB hexamer acts as an ATP-dependent pump, pulling dsDNA into and through the RuvAB complex. RuvB forms 2 homohexamers on either side of HJ DNA bound by 1 or 2 RuvA tetramers; 4 subunits per hexamer contact DNA at a time. Coordinated motions by a converter formed by DNA-disengaged RuvB subunits stimulates ATP hydrolysis and nucleotide exchange. Immobilization of the converter enables RuvB to convert the ATP-contained energy into a lever motion, pulling 2 nucleotides of DNA out of the RuvA tetramer per ATP hydrolyzed, thus driving DNA branch migration. The RuvB motors rotate together with the DNA substrate, which together with the progressing nucleotide cycle form the mechanistic basis for DNA recombination by continuous HJ branch migration. Branch migration allows RuvC to scan DNA until it finds its consensus sequence, where it cleaves and resolves cruciform DNA. This is Holliday junction branch migration complex subunit RuvB from Latilactobacillus sakei subsp. sakei (strain 23K) (Lactobacillus sakei subsp. sakei).